The chain runs to 538 residues: MARELSESTALDAQSTEDQMELLVIKVEEEEAGFPSSPDLGSEGSRERFRGFRYPEAAGPREALSRLRELCRQWLQPEMHSKEQILELLVLEQFLTILPGNLQSWVREQHPESGEEVVVLLEYLERQLDEPAPQVSGVDQGQELLCCKMALLTPAPGSQSSQFQLMKALLKHESVGSQPLQDRVLQVPVLAHGGCCREDKVVASRLTPESQGLLKVEDVALTLTPEWTQQDSSQGNLCRDEKQENHGSLVSLGDEKQTKSRDLPPAEELPEKEHGKISCHLREDIAQIPTCAEAGEQEGRLQRKQKNATGGRRHICHECGKSFAQSSGLSKHRRIHTGEKPYECEECGKAFIGSSALVIHQRVHTGEKPYECEECGKAFSHSSDLIKHQRTHTGEKPYECDDCGKTFSQSCSLLEHHRIHTGEKPYQCSMCGKAFRRSSHLLRHQRIHTGDKNVQEPEQGEAWKSRMESQLENVETPMSYKCNECERSFTQNTGLIEHQKIHTGEKPYQCNACGKGFTRISYLVQHQRSHVGKNILSQ.

Residue Ser-42 is modified to Phosphoserine. Positions 46-128 constitute an SCAN box domain; that stretch reads RERFRGFRYP…VLLEYLERQL (83 aa). A Glycyl lysine isopeptide (Lys-Gly) (interchain with G-Cter in SUMO2) cross-link involves residue Lys-171. Position 207 is a phosphothreonine (Thr-207). One can recognise a KRAB domain in the interval 214–274; that stretch reads LKVEDVALTL…PAEELPEKEH (61 aa). The segment covering 226 to 236 has biased composition (polar residues); the sequence is EWTQQDSSQGN. Residues 226–274 form a disordered region; sequence EWTQQDSSQGNLCRDEKQENHGSLVSLGDEKQTKSRDLPPAEELPEKEH. The span at 253 to 274 shows a compositional bias: basic and acidic residues; sequence GDEKQTKSRDLPPAEELPEKEH. 5 consecutive C2H2-type zinc fingers follow at residues 314-336, 342-364, 370-392, 398-420, and 426-448; these read HICHECGKSFAQSSGLSKHRRIH, YECEECGKAFIGSSALVIHQRVH, YECEECGKAFSHSSDLIKHQRTH, YECDDCGKTFSQSCSLLEHHRIH, and YQCSMCGKAFRRSSHLLRHQRIH. At Thr-449 the chain carries Phosphothreonine. 2 consecutive C2H2-type zinc fingers follow at residues 480–502 and 508–530; these read YKCNECERSFTQNTGLIEHQKIH and YQCNACGKGFTRISYLVQHQRSH.

Belongs to the krueppel C2H2-type zinc-finger protein family.

The protein resides in the nucleus. Its subcellular location is the cytoplasm. Transcriptional factor that binds to the consensus sequence 5'-[GT][AG][AGT]GGGG-3' and acts as a repressor of autophagy. Specifically represses expression of genes involved in autophagy and lysosome biogenesis/function such as MAP1LC3B, ULK1 or WIPI2. Associates with chromatin at the ITGB4 and VEGF promoters. Also acts as a transcription activator and promotes cancer cell progression and/or migration in various tumors and myelomas. This Homo sapiens (Human) protein is Zinc finger protein with KRAB and SCAN domains 3 (ZKSCAN3).